A 121-amino-acid polypeptide reads, in one-letter code: Small ribosomal subunit protein bS6 (121 aa).

This sequence belongs to the bacterial ribosomal protein bS6 family.

Its function is as follows. Binds together with bS18 to 16S ribosomal RNA. The protein is Small ribosomal subunit protein bS6 of Pelagibacter ubique (strain HTCC1062).